We begin with the raw amino-acid sequence, 664 residues long: UvrABC system protein B (664 aa).

Positions 23-180 (EGLNRGMRFQ…ERLARIGYQR (158 aa)) constitute a Helicase ATP-binding domain. Position 36–43 (36–43 (GVTGSGKT)) interacts with ATP. A Beta-hairpin motif is present at residues 89–112 (YYDYYQPEAYIPTKDLYIEKNADI). In terms of domain architecture, Helicase C-terminal spans 429-588 (DLVNEIVKVK…ITPRSVIKPL (160 aa)). Residues 622–657 (EEYMAVLEEEMYRAASELRYEDAAALRDELFRIREE) form the UVR domain.

It belongs to the UvrB family. In terms of assembly, forms a heterotetramer with UvrA during the search for lesions. Interacts with UvrC in an incision complex.

The protein localises to the cytoplasm. The UvrABC repair system catalyzes the recognition and processing of DNA lesions. A damage recognition complex composed of 2 UvrA and 2 UvrB subunits scans DNA for abnormalities. Upon binding of the UvrA(2)B(2) complex to a putative damaged site, the DNA wraps around one UvrB monomer. DNA wrap is dependent on ATP binding by UvrB and probably causes local melting of the DNA helix, facilitating insertion of UvrB beta-hairpin between the DNA strands. Then UvrB probes one DNA strand for the presence of a lesion. If a lesion is found the UvrA subunits dissociate and the UvrB-DNA preincision complex is formed. This complex is subsequently bound by UvrC and the second UvrB is released. If no lesion is found, the DNA wraps around the other UvrB subunit that will check the other stand for damage. The polypeptide is UvrABC system protein B (Thermotoga petrophila (strain ATCC BAA-488 / DSM 13995 / JCM 10881 / RKU-1)).